A 704-amino-acid polypeptide reads, in one-letter code: MATTALDLAKVRNIGIMAHIDAGKTTTTERILFYTGVNYKLGETHEGSATMDWMKEEQERGITITSAATTCRWNDTTINIIDTPGHVDFTIEVERSLRVLDGAVAVFDGKEGVEPQSEQVWRQADRYNVPRICFVNKMDKIGADFQRCVDMIRERLGANPLAVQLPIGAESDFQGVIDLIRMKAYVWSPDAPKGEMYDTIEIPDAYAEAAQEGHERLVEAVAEADDEIMELYLEGQEPTVEQLVAAIRRATISGAAVPVLCGSAFKNKGVQPLLDAIVAYLPSPLDIEAIEGHDPQDKDEEVTLQRKPSEEEPLAALAFKIMSDQHLGKLTYLRIYSGVLESGMQVLNSIKGRKERIGKIYRMHANKREEITRVGAGDIVAVVGLKDTTTGETLCDQANPIVLESMTFPAPVIEVAIEPKTKSDQEKLGTAIQRLAEEDPSFRVTTDEETGQTVISGMGELHLEVLVNRMREEFKVEANIGKPQVAYRETIRRKVEGVEYTHKKQTGGAGQYGRVVIDLEPLPIDGDGDSPGYEFVNNITGGRIPREYIPSVDAGCQEAAQFGVLAGYPLVGIKVTLQDGAYHDVDSSELAFKIAGSMAFKEAASKANPVLLEPVMAVEVTTPEEYMGDVIGDLNSRRGQIQSMEERAGTRVVKALVPLSEMFGYVGDLRSRTQGRANYTMVFHSYAEVPSNVSQEIVAKARGE.

The tr-type G domain occupies 9–285 (AKVRNIGIMA…AIVAYLPSPL (277 aa)). GTP-binding positions include 18-25 (AHIDAGKT), 82-86 (DTPGH), and 136-139 (NKMD).

It belongs to the TRAFAC class translation factor GTPase superfamily. Classic translation factor GTPase family. EF-G/EF-2 subfamily.

Its subcellular location is the cytoplasm. Its function is as follows. Catalyzes the GTP-dependent ribosomal translocation step during translation elongation. During this step, the ribosome changes from the pre-translocational (PRE) to the post-translocational (POST) state as the newly formed A-site-bound peptidyl-tRNA and P-site-bound deacylated tRNA move to the P and E sites, respectively. Catalyzes the coordinated movement of the two tRNA molecules, the mRNA and conformational changes in the ribosome. The sequence is that of Elongation factor G from Thermobifida fusca (strain YX).